Consider the following 439-residue polypeptide: Tol-Pal system protein TolB (439 aa).

The first 22 residues, Met-1 to Thr-22, serve as a signal peptide directing secretion.

The protein belongs to the TolB family. The Tol-Pal system is composed of five core proteins: the inner membrane proteins TolA, TolQ and TolR, the periplasmic protein TolB and the outer membrane protein Pal. They form a network linking the inner and outer membranes and the peptidoglycan layer.

It localises to the periplasm. Part of the Tol-Pal system, which plays a role in outer membrane invagination during cell division and is important for maintaining outer membrane integrity. This Xylella fastidiosa (strain M12) protein is Tol-Pal system protein TolB.